We begin with the raw amino-acid sequence, 238 residues long: tRNA (guanine-N(7)-)-methyltransferase (238 aa).

Residues Glu-68, Glu-93, Asp-120, and Asp-143 each contribute to the S-adenosyl-L-methionine site. The active site involves Asp-143. Substrate is bound by residues Lys-147, Asp-179, and 216-219 (TKFE).

This sequence belongs to the class I-like SAM-binding methyltransferase superfamily. TrmB family.

It carries out the reaction guanosine(46) in tRNA + S-adenosyl-L-methionine = N(7)-methylguanosine(46) in tRNA + S-adenosyl-L-homocysteine. It participates in tRNA modification; N(7)-methylguanine-tRNA biosynthesis. Its function is as follows. Catalyzes the formation of N(7)-methylguanine at position 46 (m7G46) in tRNA. The sequence is that of tRNA (guanine-N(7)-)-methyltransferase from Aliivibrio fischeri (strain MJ11) (Vibrio fischeri).